The primary structure comprises 308 residues: UDP-3-O-acyl-N-acetylglucosamine deacetylase (308 aa).

Zn(2+) contacts are provided by His77, His233, and Asp237. The Proton donor role is filled by His260.

This sequence belongs to the LpxC family. Zn(2+) serves as cofactor.

The catalysed reaction is a UDP-3-O-[(3R)-3-hydroxyacyl]-N-acetyl-alpha-D-glucosamine + H2O = a UDP-3-O-[(3R)-3-hydroxyacyl]-alpha-D-glucosamine + acetate. Its pathway is glycolipid biosynthesis; lipid IV(A) biosynthesis; lipid IV(A) from (3R)-3-hydroxytetradecanoyl-[acyl-carrier-protein] and UDP-N-acetyl-alpha-D-glucosamine: step 2/6. Functionally, catalyzes the hydrolysis of UDP-3-O-myristoyl-N-acetylglucosamine to form UDP-3-O-myristoylglucosamine and acetate, the committed step in lipid A biosynthesis. This chain is UDP-3-O-acyl-N-acetylglucosamine deacetylase, found in Nitratidesulfovibrio vulgaris (strain ATCC 29579 / DSM 644 / CCUG 34227 / NCIMB 8303 / VKM B-1760 / Hildenborough) (Desulfovibrio vulgaris).